The chain runs to 710 residues: Ephexin-1 (710 aa).

2 stretches are compositionally biased toward basic and acidic residues: residues 1–11 (METRESEDLEK) and 26–41 (EPAK…KEET). The disordered stretch occupies residues 1–143 (METRESEDLE…PGNGATPEEW (143 aa)). The interval 1–273 (METRESEDLE…LEILQPEEIK (273 aa)) is regulatory region; modulates activity toward RHOA, RAC1 and CDC42. Polar residues-rich tracts occupy residues 89–102 (ADSQ…NEPL) and 127–136 (MSESSSTPGN). Phosphotyrosine is present on Tyr179. Residues 194–236 (RRQQDAEIEDNTNGSPASEDTPEEEEEEEEEEEPASPPERKTL) are disordered. Acidic residues predominate over residues 213 to 227 (DTPEEEEEEEEEEEP). Residues 273–457 (KLQEAMFELV…EMVVKACNEG (185 aa)) form the DH domain. The 113-residue stretch at 489 to 601 (WLLKQGELQQ…WMTSLAPNRR (113 aa)) folds into the PH domain. Residues 612–673 (LDCPQVQCVH…PSSMTEEILN (62 aa)) form the SH3 domain. A compositionally biased stretch (basic and acidic residues) spans 687–699 (VHKMDDPQRSQNK). Positions 687–710 (VHKMDDPQRSQNKDRRKLGSRNRQ) are disordered. A compositionally biased stretch (basic residues) spans 700–710 (DRRKLGSRNRQ).

Interacts with CDK5R1 and EPHA4; activated by EPHA4 through the CDK5 kinase. Post-translationally, src-dependent phosphorylation at Tyr-179 upon EPHA4 activation increases the guanine exchange factor activity toward RHOA. Phosphorylation by CDK5 upon EPHA4 activation by EFNA1 may regulate dendritic spine morphogenesis. In terms of tissue distribution, highly expressed in brain specifically in caudate nucleus and to a lower extent in amygdala and hippocampus. Also detected in lung.

It is found in the cytoplasm. The protein resides in the membrane. It localises to the cell projection. The protein localises to the growth cone. In terms of biological role, acts as a guanine nucleotide exchange factor (GEF) which differentially activates the GTPases RHOA, RAC1 and CDC42. Plays a role in axon guidance regulating ephrin-induced growth cone collapse and dendritic spine morphogenesis. Upon activation by ephrin through EPHA4, the GEF activity switches toward RHOA resulting in its activation. Activated RHOA promotes cone retraction at the expense of RAC1- and CDC42-stimulated growth cone extension. The polypeptide is Ephexin-1 (NGEF) (Homo sapiens (Human)).